Reading from the N-terminus, the 487-residue chain is Glycogen synthase (487 aa).

Lys19 contributes to the ADP-alpha-D-glucose binding site.

This sequence belongs to the glycosyltransferase 1 family. Bacterial/plant glycogen synthase subfamily.

The enzyme catalyses [(1-&gt;4)-alpha-D-glucosyl](n) + ADP-alpha-D-glucose = [(1-&gt;4)-alpha-D-glucosyl](n+1) + ADP + H(+). Its pathway is glycan biosynthesis; glycogen biosynthesis. Synthesizes alpha-1,4-glucan chains using ADP-glucose. The chain is Glycogen synthase from Moorella thermoacetica (strain ATCC 39073 / JCM 9320).